The sequence spans 204 residues: MKLYTKPGACSLADHIVLRWSCLPFELTVVDAATMKSPDYLRLNPAGAVPLLVVDQWALTQNAAILNYIADTAPLTGLGGDGTARSRAEINRWIAFVNADLHPTFKPLFGSTAYLQEDALIQRSHEDARTKLRTLYTRVDAHLQGRNWLAGDTHTGADAYLFVTLRWAHKAGVDLSGLSALDAFFQRMLADADVQAALQAEGLN.

One can recognise a GST N-terminal domain in the interval Met1–Gly77. Glutathione-binding positions include Cys10, Val49, Gln61–Asn62, and His102. Residues Thr83–Asn204 form the GST C-terminal domain.

Belongs to the GST superfamily. In terms of assembly, homodimer.

It localises to the cytoplasm. The catalysed reaction is RX + glutathione = an S-substituted glutathione + a halide anion + H(+). Its function is as follows. Conjugation of reduced glutathione to a wide number of exogenous and endogenous hydrophobic electrophiles. This is Glutathione S-transferase GST-4.5 (gst) from Xanthomonas campestris pv. campestris (strain ATCC 33913 / DSM 3586 / NCPPB 528 / LMG 568 / P 25).